A 353-amino-acid chain; its full sequence is Paraneoplastic antigen Ma1 (353 aa).

This sequence belongs to the PNMA family. Testis- and brain-specific. In some cancer patients, specifically expressed by paraneoplastic tumor cells.

It localises to the nucleus. The protein resides in the nucleolus. The polypeptide is Paraneoplastic antigen Ma1 (PNMA1) (Homo sapiens (Human)).